The sequence spans 211 residues: Large ribosomal subunit protein uL3 (211 aa).

Residues 130-154 (RGPMAHGSKFHRHQGSNGSATTPGR) are disordered.

It belongs to the universal ribosomal protein uL3 family. Part of the 50S ribosomal subunit. Forms a cluster with proteins L14 and L19.

One of the primary rRNA binding proteins, it binds directly near the 3'-end of the 23S rRNA, where it nucleates assembly of the 50S subunit. This Lachnospira eligens (strain ATCC 27750 / DSM 3376 / VPI C15-48 / C15-B4) (Eubacterium eligens) protein is Large ribosomal subunit protein uL3.